A 278-amino-acid chain; its full sequence is MTQMNFTDRATRVAIIANGKYQSKRVASKLFAAFKHDPDFYLSKKDPDIVISIGGDGMLLSAFHMYEKQLDKVRFVGVHTGHLGFYTDYRDFEVDTLINNLKNDKGEQISYPILKVTITLEDGRVIRARALNESTIKRIEKTMVADVVINQVVFERFRGDGILVSTPTGSTAYNKSLGGAVLHPTIEALQLTEISSLNNRVYRTLGSSVIIPKKDAIEIVPKRVGVYTISIDNKTVHYKNVTKIEYSIDEKSINFVSTPSHTSFWERVNDAFIGEPEH.

Aspartate 56 functions as the Proton acceptor in the catalytic mechanism. NAD(+) is bound by residues 56-57, 132-133, arginine 158, aspartate 160, and 171-176; these read DG, NE, and TAYNKS.

Belongs to the NAD kinase family. The cofactor is a divalent metal cation.

The protein localises to the cytoplasm. It carries out the reaction NAD(+) + ATP = ADP + NADP(+) + H(+). In terms of biological role, involved in the regulation of the intracellular balance of NAD and NADP, and is a key enzyme in the biosynthesis of NADP. Catalyzes specifically the phosphorylation on 2'-hydroxyl of the adenosine moiety of NAD to yield NADP. This is NAD kinase from Streptococcus agalactiae serotype V (strain ATCC BAA-611 / 2603 V/R).